A 551-amino-acid chain; its full sequence is Rhodopsin kinase grk7-a (551 aa).

Residue Ser36 is modified to Phosphoserine. Residues 57 to 174 (YQSICVEQPI…QNSPFYDRFL (118 aa)) form the RGS domain. Residues 189–451 (FYEFRILGKG…DDDPRKHAFF (263 aa)) enclose the Protein kinase domain. Residues 195-203 (LGKGGFGEV) and Lys218 contribute to the ATP site. Asp314 (proton acceptor) is an active-site residue. Positions 452–517 (KSINFQRLEA…GAIPISWQKE (66 aa)) constitute an AGC-kinase C-terminal domain. The residue at position 487 (Ser487) is a Phosphoserine. The disordered stretch occupies residues 529–551 (DPSREATGGGGNSGEKSGVCSIL). Low complexity predominate over residues 542-551 (GEKSGVCSIL). Cys548 carries the cysteine methyl ester modification. Residue Cys548 is the site of S-geranylgeranyl cysteine attachment. Positions 549 to 551 (SIL) are cleaved as a propeptide — removed in mature form.

The protein belongs to the protein kinase superfamily. AGC Ser/Thr protein kinase family. GPRK subfamily. In terms of processing, autophosphorylated in vitro at Ser-487. Phosphorylation at Ser-36 is regulated by light and activated by cAMP.

The protein localises to the membrane. The catalysed reaction is L-threonyl-[rhodopsin] + ATP = O-phospho-L-threonyl-[rhodopsin] + ADP + H(+). The enzyme catalyses L-seryl-[rhodopsin] + ATP = O-phospho-L-seryl-[rhodopsin] + ADP + H(+). Its function is as follows. Retina-specific kinase involved in the shutoff of the photoresponse and adaptation to changing light conditions via cone opsin phosphorylation, including rhodopsin (RHO). This is Rhodopsin kinase grk7-a (grk7-a) from Xenopus laevis (African clawed frog).